The primary structure comprises 64 residues: DNA gyrase inhibitor YacG (64 aa).

Zn(2+)-binding residues include Cys-10, Cys-13, Cys-29, and Cys-33.

Belongs to the DNA gyrase inhibitor YacG family. Interacts with GyrB. Zn(2+) is required as a cofactor.

Inhibits all the catalytic activities of DNA gyrase by preventing its interaction with DNA. Acts by binding directly to the C-terminal domain of GyrB, which probably disrupts DNA binding by the gyrase. This Pectobacterium atrosepticum (strain SCRI 1043 / ATCC BAA-672) (Erwinia carotovora subsp. atroseptica) protein is DNA gyrase inhibitor YacG.